An 855-amino-acid polypeptide reads, in one-letter code: DNA mismatch repair protein MutS (855 aa).

616–623 (GPNMGGKS) serves as a coordination point for ATP.

This sequence belongs to the DNA mismatch repair MutS family.

In terms of biological role, this protein is involved in the repair of mismatches in DNA. It is possible that it carries out the mismatch recognition step. This protein has a weak ATPase activity. This chain is DNA mismatch repair protein MutS, found in Salmonella newport (strain SL254).